The primary structure comprises 38 residues: MIEPLLLGIVLGLIPVTLAGLFVAAYLQYKRGNQFNLD.

Residues 5-25 (LLLGIVLGLIPVTLAGLFVAA) traverse the membrane as a helical segment.

Belongs to the PetG family. The 4 large subunits of the cytochrome b6-f complex are cytochrome b6, subunit IV (17 kDa polypeptide, PetD), cytochrome f and the Rieske protein, while the 4 small subunits are PetG, PetL, PetM and PetN. The complex functions as a dimer.

Its subcellular location is the cellular thylakoid membrane. Its function is as follows. Component of the cytochrome b6-f complex, which mediates electron transfer between photosystem II (PSII) and photosystem I (PSI), cyclic electron flow around PSI, and state transitions. PetG is required for either the stability or assembly of the cytochrome b6-f complex. This Synechocystis sp. (strain ATCC 27184 / PCC 6803 / Kazusa) protein is Cytochrome b6-f complex subunit 5.